Consider the following 315-residue polypeptide: tRNA dimethylallyltransferase (315 aa).

11–18 lines the ATP pocket; the sequence is GPTASGKS. 13 to 18 is a binding site for substrate; that stretch reads TASGKS. 2 interaction with substrate tRNA regions span residues 36 to 39 and 160 to 164; these read DSMQ and QRLIR.

This sequence belongs to the IPP transferase family. As to quaternary structure, monomer. Mg(2+) serves as cofactor.

The enzyme catalyses adenosine(37) in tRNA + dimethylallyl diphosphate = N(6)-dimethylallyladenosine(37) in tRNA + diphosphate. Catalyzes the transfer of a dimethylallyl group onto the adenine at position 37 in tRNAs that read codons beginning with uridine, leading to the formation of N6-(dimethylallyl)adenosine (i(6)A). The chain is tRNA dimethylallyltransferase from Rickettsia bellii (strain RML369-C).